We begin with the raw amino-acid sequence, 372 residues long: Probable butyrate kinase (372 aa).

The protein belongs to the acetokinase family.

It is found in the cytoplasm. The enzyme catalyses butanoate + ATP = butanoyl phosphate + ADP. The protein is Probable butyrate kinase of Oleidesulfovibrio alaskensis (strain ATCC BAA-1058 / DSM 17464 / G20) (Desulfovibrio alaskensis).